A 304-amino-acid chain; its full sequence is Phospholipase A1 (304 aa).

Cys-6 and Cys-90 form a disulfide bridge. Asn-61 is a glycosylation site (N-linked (GlcNAc...) asparagine). Ser-140 functions as the Nucleophile in the catalytic mechanism. Asp-168 (charge relay system) is an active-site residue. 2 disulfides stabilise this stretch: Cys-179–Cys-184 and Cys-222–Cys-231. His-233 acts as the Charge relay system in catalysis. Cystine bridges form between Cys-248-Cys-272, Cys-249-Cys-297, and Cys-265-Cys-270.

The protein belongs to the AB hydrolase superfamily. Lipase family. Expressed by the venom gland.

It is found in the secreted. It catalyses the reaction a 1,2-diacyl-sn-glycero-3-phosphocholine + H2O = a 2-acyl-sn-glycero-3-phosphocholine + a fatty acid + H(+). Catalyzes the hydrolysis of phosphatidylcholine with phospholipase A1 activity. May act as an allergen and induce hemolytic activity. This is Phospholipase A1 from Vespa velutina (Asian yellow-legged hornet).